The primary structure comprises 78 residues: Acyl carrier protein (78 aa).

Positions 1–75 (MIKEKILSIV…DLISVVKNST (75 aa)) constitute a Carrier domain. The residue at position 35 (Ser35) is an O-(pantetheine 4'-phosphoryl)serine.

It belongs to the acyl carrier protein (ACP) family. Post-translationally, 4'-phosphopantetheine is transferred from CoA to a specific serine of apo-ACP by AcpS. This modification is essential for activity because fatty acids are bound in thioester linkage to the sulfhydryl of the prosthetic group.

It localises to the cytoplasm. It participates in lipid metabolism; fatty acid biosynthesis. Functionally, carrier of the growing fatty acid chain in fatty acid biosynthesis. In Shigella flexneri, this protein is Acyl carrier protein (acpP).